The following is a 20-amino-acid chain: Peptidase T (20 aa).

Belongs to the peptidase M20B family. Zn(2+) is required as a cofactor. The cofactor is Co(2+).

It is found in the cell envelope. It catalyses the reaction Release of the N-terminal residue from a tripeptide.. Inhibited by the chelating agents EDTA and 1,10-phenanthroline, by bestatin and amastatin, p-hydroxymercuribenzoate and some divalent cations at high concentration. Cleaves a wide range of dipeptides and tripeptides, but does not display activity against larger peptides. May have a role in the survival of F.nucleatum in the subgingival environment of the mouth. This is Peptidase T (pepT) from Fusobacterium nucleatum subsp. polymorphum (Fusobacterium polymorphum).